The chain runs to 77 residues: Acyl carrier protein (77 aa).

Residues 2-77 (ADTLSRITKI…DVVEYIEGRQ (76 aa)) form the Carrier domain. Serine 37 is modified (O-(pantetheine 4'-phosphoryl)serine).

This sequence belongs to the acyl carrier protein (ACP) family. Post-translationally, 4'-phosphopantetheine is transferred from CoA to a specific serine of apo-ACP by AcpS. This modification is essential for activity because fatty acids are bound in thioester linkage to the sulfhydryl of the prosthetic group.

Its subcellular location is the cytoplasm. Its pathway is lipid metabolism; fatty acid biosynthesis. Carrier of the growing fatty acid chain in fatty acid biosynthesis. The polypeptide is Acyl carrier protein (Halalkalibacterium halodurans (strain ATCC BAA-125 / DSM 18197 / FERM 7344 / JCM 9153 / C-125) (Bacillus halodurans)).